Reading from the N-terminus, the 333-residue chain is Adenosine deaminase (333 aa).

Zn(2+) is bound by residues His12 and His14. Residues His14, Asp16, and Gly170 each coordinate substrate. His197 is a Zn(2+) binding site. Residue Glu200 is the Proton donor of the active site. Position 278 (Asp278) interacts with Zn(2+). Asp279 lines the substrate pocket.

It belongs to the metallo-dependent hydrolases superfamily. Adenosine and AMP deaminases family. Adenosine deaminase subfamily. The cofactor is Zn(2+).

The catalysed reaction is adenosine + H2O + H(+) = inosine + NH4(+). It catalyses the reaction 2'-deoxyadenosine + H2O + H(+) = 2'-deoxyinosine + NH4(+). Its function is as follows. Catalyzes the hydrolytic deamination of adenosine and 2-deoxyadenosine. The protein is Adenosine deaminase of Escherichia coli (strain SE11).